Reading from the N-terminus, the 122-residue chain is Large ribosomal subunit protein uL14 (122 aa).

The protein belongs to the universal ribosomal protein uL14 family. As to quaternary structure, part of the 50S ribosomal subunit. Forms a cluster with proteins L3 and L19. In the 70S ribosome, L14 and L19 interact and together make contacts with the 16S rRNA in bridges B5 and B8.

Binds to 23S rRNA. Forms part of two intersubunit bridges in the 70S ribosome. This is Large ribosomal subunit protein uL14 from Flavobacterium johnsoniae (strain ATCC 17061 / DSM 2064 / JCM 8514 / BCRC 14874 / CCUG 350202 / NBRC 14942 / NCIMB 11054 / UW101) (Cytophaga johnsonae).